The primary structure comprises 420 residues: UDP-N-acetylglucosamine 1-carboxyvinyltransferase (420 aa).

Residue 22 to 23 participates in phosphoenolpyruvate binding; it reads KN. UDP-N-acetyl-alpha-D-glucosamine is bound at residue Arg-93. Cys-117 acts as the Proton donor in catalysis. Cys-117 is modified (2-(S-cysteinyl)pyruvic acid O-phosphothioketal). 2 residues coordinate UDP-N-acetyl-alpha-D-glucosamine: Asp-307 and Ile-329.

Belongs to the EPSP synthase family. MurA subfamily.

The protein resides in the cytoplasm. It carries out the reaction phosphoenolpyruvate + UDP-N-acetyl-alpha-D-glucosamine = UDP-N-acetyl-3-O-(1-carboxyvinyl)-alpha-D-glucosamine + phosphate. Its pathway is cell wall biogenesis; peptidoglycan biosynthesis. Functionally, cell wall formation. Adds enolpyruvyl to UDP-N-acetylglucosamine. In Shewanella halifaxensis (strain HAW-EB4), this protein is UDP-N-acetylglucosamine 1-carboxyvinyltransferase.